We begin with the raw amino-acid sequence, 1205 residues long: A disintegrin and metalloproteinase with thrombospondin motifs 3 (1205 aa).

The signal sequence occupies residues 1-20 (MVLLSLWLIAAALVEVRTSA). The propeptide occupies 21–249 (DGQAGNEEMV…QLNETMRRRR (229 aa)). Asparagine 83, asparagine 119, asparagine 242, and asparagine 345 each carry an N-linked (GlcNAc...) asparagine glycan. The Peptidase M12B domain maps to 256 to 460 (YNIEVLLGVD…HSYDCLLDDP (205 aa)). Cystine bridges form between cysteine 333-cysteine 382, cysteine 376-cysteine 455, and cysteine 415-cysteine 441. Histidine 398 contacts Zn(2+). The active site involves glutamate 399. The Zn(2+) site is built by histidine 402 and histidine 408. Residues 470 to 550 (ELPGINYSMD…MWKNANQQKQ (81 aa)) form the Disintegrin domain. Asparagine 475 is a glycosylation site (N-linked (GlcNAc...) asparagine). 7 disulfide bridges follow: cysteine 482-cysteine 507, cysteine 493-cysteine 516, cysteine 502-cysteine 535, cysteine 529-cysteine 540, cysteine 563-cysteine 600, cysteine 567-cysteine 605, and cysteine 578-cysteine 590. A TSP type-1 1 domain is found at 551 to 606 (DGNWGSWTKFGSCSRTCGTGVRFRTRQCNNPMPINGGQDCPGVNFEYQLCNTEECQ). Positions 713-844 (RTVKGTFTRT…NSNNVIQEEL (132 aa)) are spacer. N-linked (GlcNAc...) asparagine glycosylation occurs at asparagine 814. 3 TSP type-1 domains span residues 845–905 (DTFE…QECT), 906–965 (HPLW…NRVP), and 966–1014 (CPAQ…QLPP). A glycan (N-linked (GlcNAc...) asparagine) is linked at asparagine 942. 3 disulfide bridges follow: cysteine 978–cysteine 1010, cysteine 982–cysteine 1015, and cysteine 993–cysteine 999. Positions 1015–1054 (CNDEPCLGDKSIFCQMEVLARYCSIPGYNKLCCESCSKRS) constitute a PLAC domain. The interval 1174–1205 (DSIGASSQARTSKKDGKIIDNRRPTRSSTLER) is disordered. Positions 1185-1205 (SKKDGKIIDNRRPTRSSTLER) are enriched in basic and acidic residues.

Zn(2+) serves as cofactor. In terms of processing, the precursor is cleaved by a furin endopeptidase. Glycosylated. Can be O-fucosylated by POFUT2 on a serine or a threonine residue found within the consensus sequence C1-X(2)-(S/T)-C2-G of the TSP type-1 repeat domains where C1 and C2 are the first and second cysteine residue of the repeat, respectively. Fucosylated repeats can then be further glycosylated by the addition of a beta-1,3-glucose residue by the glucosyltransferase, B3GALTL. Fucosylation mediates the efficient secretion of ADAMTS family members. Can also be C-glycosylated with one or two mannose molecules on tryptophan residues within the consensus sequence W-X-X-W of the TPRs, and N-glycosylated. These other glycosylations can also facilitate secretion. In terms of tissue distribution, found in cartilage and skin.

It localises to the secreted. The protein localises to the extracellular space. Its subcellular location is the extracellular matrix. Cleaves the propeptides of type II collagen prior to fibril assembly. Does not act on types I and III collagens. This is A disintegrin and metalloproteinase with thrombospondin motifs 3 (ADAMTS3) from Homo sapiens (Human).